Here is a 476-residue protein sequence, read N- to C-terminus: Protein EARLY HEADING DATE 2 (476 aa).

Residues 1-13 are compositionally biased toward polar residues; the sequence is MLLSDLSSDQEAT. The tract at residues 1 to 27 is disordered; it reads MLLSDLSSDQEATGSNSHGGGGGGDRM. 2 consecutive C2H2-type zinc fingers follow at residues 106–128 and 156–186; these read FVCE…RRGH and YVCP…SRKH. 2 short sequence motifs (nuclear localization signal) span residues 124 to 131 and 178 to 185; these read HRRGHNLP and IKKHFSRK. Residues 191-214 form a C2H2-type 2; degenerate zinc finger; it reads WRCERCGKRYAVHSDWKAHVKNCG. C193, C196, H209, C213, C220, C222, H235, and C239 together coordinate Zn(2+). The segment at 218–241 adopts a CCHC-type 2; atypical zinc-finger fold; it reads YRCDCGILFSRKDSLLTHRAFCDA. The segment at 228-240 is SHR-binding; sequence RKDSLLTHRAFCD.

It is found in the nucleus. Functionally, transcription activator that acts as a flowering master switch in both long and short days, independently of the circadian clock. Promotes flowering upstream of HD1 by up-regulating FTL1, FTL4, FTL5, FTL6, EHD1, HD3A and RFT1. Seems to repress FTL11 expression. May recognize the consensus motif 5'-TTTGTCGTAAT-3' in target gene promoters. The sequence is that of Protein EARLY HEADING DATE 2 from Oryza sativa subsp. indica (Rice).